The primary structure comprises 329 residues: DNA-directed RNA polymerase subunit alpha (329 aa).

Residues 1-233 (MVREKVKVST…NLFIPFLHVE (233 aa)) form an alpha N-terminal domain (alpha-NTD) region. An alpha C-terminal domain (alpha-CTD) region spans residues 266-329 (TKELAFQYIF…KKILDILEKK (64 aa)).

Belongs to the RNA polymerase alpha chain family. In plastids the minimal PEP RNA polymerase catalytic core is composed of four subunits: alpha, beta, beta', and beta''. When a (nuclear-encoded) sigma factor is associated with the core the holoenzyme is formed, which can initiate transcription.

The protein localises to the plastid. It localises to the chloroplast. The enzyme catalyses RNA(n) + a ribonucleoside 5'-triphosphate = RNA(n+1) + diphosphate. DNA-dependent RNA polymerase catalyzes the transcription of DNA into RNA using the four ribonucleoside triphosphates as substrates. The polypeptide is DNA-directed RNA polymerase subunit alpha (Arabidopsis thaliana (Mouse-ear cress)).